We begin with the raw amino-acid sequence, 351 residues long: MIKLNHINKTYPNGFVALKNIDLEVAKGDIMGIIGYSGAGKSTLIRIINRLEEPTSGTLFVDGVNMLGLKQKELQMQRQKIGMIFQHFNLLSARNVFDNVAFALEIAKWDKKAIKPRVDELLELVGLSERASFFPSQLSGGQKQRVAIARALANHPKVLLCDEATSALDTKTTKSILALLRDIQRRLGLSVVLITHQIEVVREICNKMCVVSDGAIVERGSVAEVFAAPKHPITRELISFLPQDEGHIISHLKDLHNVYKVIFTGPYAHLPLVSQMIREFDVDVNILSGNIDELATGEVGHLVLKFIATDDKRDKALSWLKEQGVSIEDLNLMCQNTDSIQLSQKIESKAV.

The ABC transporter domain maps to 2 to 238 (IKLNHINKTY…PKHPITRELI (237 aa)). 35 to 42 (GYSGAGKS) provides a ligand contact to ATP.

This sequence belongs to the ABC transporter superfamily. Methionine importer (TC 3.A.1.24) family. The complex is composed of two ATP-binding proteins (MetN), two transmembrane proteins (MetI) and a solute-binding protein (MetQ).

It is found in the cell inner membrane. It catalyses the reaction L-methionine(out) + ATP + H2O = L-methionine(in) + ADP + phosphate + H(+). The enzyme catalyses D-methionine(out) + ATP + H2O = D-methionine(in) + ADP + phosphate + H(+). In terms of biological role, part of the ABC transporter complex MetNIQ involved in methionine import. Responsible for energy coupling to the transport system. The sequence is that of Methionine import ATP-binding protein MetN from Helicobacter hepaticus (strain ATCC 51449 / 3B1).